The primary structure comprises 455 residues: Secreted triacylglycerol lipase LIP4 (455 aa).

Positions 1–19 are cleaved as a signal peptide; it reads MKLNLFILGLLTLAAHAYA. Asparagine 98 carries an N-linked (GlcNAc...) asparagine glycan. Cysteine 115 and cysteine 284 are oxidised to a cystine. Residue serine 197 is the Nucleophile of the active site. A glycan (N-linked (GlcNAc...) asparagine) is linked at asparagine 230. Catalysis depends on residues aspartate 344 and histidine 378. A disulfide bridge connects residues cysteine 360 and cysteine 406.

This sequence belongs to the AB hydrolase superfamily. Lipase family. Class Lip subfamily.

The protein localises to the secreted. It localises to the cell wall. The enzyme catalyses a triacylglycerol + H2O = a diacylglycerol + a fatty acid + H(+). It catalyses the reaction a monoacylglycerol + H2O = glycerol + a fatty acid + H(+). It carries out the reaction a diacylglycerol + H2O = a monoacylglycerol + a fatty acid + H(+). In terms of biological role, secreted lipase involved in Dandruff and seborrheic dermatitis (D/SD) probably via lipase-mediated breakdown of sebaceous lipids and release of irritating free fatty acids. Has triacylglycerol lipase activity and is able to hydrolyze triolein. Mostly converts monoolein to di- and triolein, while free fatty acids are only produced in low amounts. In Malassezia globosa (strain ATCC MYA-4612 / CBS 7966) (Dandruff-associated fungus), this protein is Secreted triacylglycerol lipase LIP4.